The sequence spans 371 residues: Chaperone protein DnaJ (371 aa).

A J domain is found at 5–69 (DYYEILGIAK…QKRAAYDQHG (65 aa)). A CR-type zinc finger spans residues 127 to 205 (GASKEIHITT…CRGQGKVEEP (79 aa)). Residues C140, C143, C157, C160, C179, C182, C193, and C196 each contribute to the Zn(2+) site. CXXCXGXG motif repeat units lie at residues 140–147 (CEHCKGSG), 157–164 (CTTCRGVG), 179–186 (CPRCHGQG), and 193–200 (CRQCRGQG).

Belongs to the DnaJ family. In terms of assembly, homodimer. Zn(2+) serves as cofactor.

Its subcellular location is the cytoplasm. Functionally, participates actively in the response to hyperosmotic and heat shock by preventing the aggregation of stress-denatured proteins and by disaggregating proteins, also in an autonomous, DnaK-independent fashion. Unfolded proteins bind initially to DnaJ; upon interaction with the DnaJ-bound protein, DnaK hydrolyzes its bound ATP, resulting in the formation of a stable complex. GrpE releases ADP from DnaK; ATP binding to DnaK triggers the release of the substrate protein, thus completing the reaction cycle. Several rounds of ATP-dependent interactions between DnaJ, DnaK and GrpE are required for fully efficient folding. Also involved, together with DnaK and GrpE, in the DNA replication of plasmids through activation of initiation proteins. The sequence is that of Chaperone protein DnaJ from Hamiltonella defensa subsp. Acyrthosiphon pisum (strain 5AT).